Here is an 84-residue protein sequence, read N- to C-terminus: MERSNRKTRIGRVVSNKMDKTIVVAVETKVRHPLYGKIMNRTTKFKAHDENNAANINDKVLIMETRPLSKQKRWRLVEVVEKAK.

Belongs to the universal ribosomal protein uS17 family. As to quaternary structure, part of the 30S ribosomal subunit.

Functionally, one of the primary rRNA binding proteins, it binds specifically to the 5'-end of 16S ribosomal RNA. The protein is Small ribosomal subunit protein uS17 of Clostridium botulinum (strain ATCC 19397 / Type A).